A 194-amino-acid polypeptide reads, in one-letter code: ATP-dependent Clp protease proteolytic subunit (194 aa).

The active-site Nucleophile is Ser97. Residue His122 is part of the active site.

This sequence belongs to the peptidase S14 family. In terms of assembly, fourteen ClpP subunits assemble into 2 heptameric rings which stack back to back to give a disk-like structure with a central cavity, resembling the structure of eukaryotic proteasomes.

The protein resides in the cytoplasm. The catalysed reaction is Hydrolysis of proteins to small peptides in the presence of ATP and magnesium. alpha-casein is the usual test substrate. In the absence of ATP, only oligopeptides shorter than five residues are hydrolyzed (such as succinyl-Leu-Tyr-|-NHMec, and Leu-Tyr-Leu-|-Tyr-Trp, in which cleavage of the -Tyr-|-Leu- and -Tyr-|-Trp bonds also occurs).. Functionally, cleaves peptides in various proteins in a process that requires ATP hydrolysis. Has a chymotrypsin-like activity. Plays a major role in the degradation of misfolded proteins. The chain is ATP-dependent Clp protease proteolytic subunit from Campylobacter jejuni subsp. jejuni serotype O:6 (strain 81116 / NCTC 11828).